Reading from the N-terminus, the 31-residue chain is Phospholipase A2 homolog P-elapitoxin-Aa1a beta chain (31 aa).

The protein belongs to the phospholipase A2 family. Group I subfamily. Heterotrimer of alpha, beta and gamma chains, each related to PLA2. Expressed by the venom gland.

It localises to the secreted. Heterotrimer: Snake venom phospholipase A2 (PLA2) that has presynaptic neurotoxicity. Inhibits nerve-evoked twitch contractions but not responses to cholinergic agonists acetylcholine and carbachol and to depolarizing agonist KCl. Causes a fade in tetanic contractions. Displays a triphasic mode of action with depression, enhancement and blockade of neurotransmission. Does not display myotoxic activity such as changes in baseline muscle tension or inhibition of directly stimulated muscle twitches. All subunits are necessary for maximum toxicity. In terms of biological role, monomer: The beta chain has no enzymatic activity and is not toxic by itself. The protein is Phospholipase A2 homolog P-elapitoxin-Aa1a beta chain of Acanthophis antarcticus (Common death adder).